The chain runs to 842 residues: DNA gyrase subunit A (842 aa).

Positions 42–511 (LPEVRDGLKP…ADGEVSDEDL (470 aa)) constitute a Topo IIA-type catalytic domain. The O-(5'-phospho-DNA)-tyrosine intermediate role is filled by Y130. A GyrA-box motif is present at residues 538–544 (QKRGGKG). The segment at 822-842 (EDEAAESISESDADTAESPEA) is disordered.

It belongs to the type II topoisomerase GyrA/ParC subunit family. Heterotetramer, composed of two GyrA and two GyrB chains. In the heterotetramer, GyrA contains the active site tyrosine that forms a transient covalent intermediate with DNA, while GyrB binds cofactors and catalyzes ATP hydrolysis.

It localises to the cytoplasm. It catalyses the reaction ATP-dependent breakage, passage and rejoining of double-stranded DNA.. Inhibited by 4-quinoline drugs (nalidixic acid, ciprofloxacin, ofloxacin), although it is much less sensitive than the corresponding enzyme from E.coli. In terms of biological role, a type II topoisomerase that negatively supercoils closed circular double-stranded (ds) DNA in an ATP-dependent manner to modulate DNA topology and maintain chromosomes in an underwound state. Negative supercoiling favors strand separation, and DNA replication, transcription, recombination and repair, all of which involve strand separation. Also able to catalyze the interconversion of other topological isomers of dsDNA rings, including catenanes and knotted rings. Type II topoisomerases break and join 2 DNA strands simultaneously in an ATP-dependent manner. In Mycolicibacterium smegmatis (strain ATCC 700084 / mc(2)155) (Mycobacterium smegmatis), this protein is DNA gyrase subunit A.